Reading from the N-terminus, the 211-residue chain is Thiamine-phosphate synthase (211 aa).

Residues 37–41 (QLRIK) and Asn-69 contribute to the 4-amino-2-methyl-5-(diphosphooxymethyl)pyrimidine site. 2 residues coordinate Mg(2+): Asp-70 and Asp-89. Ser-108 lines the 4-amino-2-methyl-5-(diphosphooxymethyl)pyrimidine pocket. 134–136 (TQT) provides a ligand contact to 2-[(2R,5Z)-2-carboxy-4-methylthiazol-5(2H)-ylidene]ethyl phosphate. A 4-amino-2-methyl-5-(diphosphooxymethyl)pyrimidine-binding site is contributed by Lys-137. Residues Gly-166 and 186–187 (VS) each bind 2-[(2R,5Z)-2-carboxy-4-methylthiazol-5(2H)-ylidene]ethyl phosphate.

This sequence belongs to the thiamine-phosphate synthase family. Mg(2+) serves as cofactor.

It catalyses the reaction 2-[(2R,5Z)-2-carboxy-4-methylthiazol-5(2H)-ylidene]ethyl phosphate + 4-amino-2-methyl-5-(diphosphooxymethyl)pyrimidine + 2 H(+) = thiamine phosphate + CO2 + diphosphate. It carries out the reaction 2-(2-carboxy-4-methylthiazol-5-yl)ethyl phosphate + 4-amino-2-methyl-5-(diphosphooxymethyl)pyrimidine + 2 H(+) = thiamine phosphate + CO2 + diphosphate. The catalysed reaction is 4-methyl-5-(2-phosphooxyethyl)-thiazole + 4-amino-2-methyl-5-(diphosphooxymethyl)pyrimidine + H(+) = thiamine phosphate + diphosphate. It functions in the pathway cofactor biosynthesis; thiamine diphosphate biosynthesis; thiamine phosphate from 4-amino-2-methyl-5-diphosphomethylpyrimidine and 4-methyl-5-(2-phosphoethyl)-thiazole: step 1/1. Functionally, condenses 4-methyl-5-(beta-hydroxyethyl)thiazole monophosphate (THZ-P) and 2-methyl-4-amino-5-hydroxymethyl pyrimidine pyrophosphate (HMP-PP) to form thiamine monophosphate (TMP). The protein is Thiamine-phosphate synthase of Shigella dysenteriae serotype 1 (strain Sd197).